The sequence spans 144 residues: Large ribosomal subunit protein uL11 (144 aa).

This sequence belongs to the universal ribosomal protein uL11 family. As to quaternary structure, part of the ribosomal stalk of the 50S ribosomal subunit. Interacts with L10 and the large rRNA to form the base of the stalk. L10 forms an elongated spine to which L12 dimers bind in a sequential fashion forming a multimeric L10(L12)X complex. Post-translationally, one or more lysine residues are methylated.

Functionally, forms part of the ribosomal stalk which helps the ribosome interact with GTP-bound translation factors. The sequence is that of Large ribosomal subunit protein uL11 from Gluconobacter oxydans (strain 621H) (Gluconobacter suboxydans).